The chain runs to 295 residues: Aspartate carbamoyltransferase catalytic subunit (295 aa).

Residues R49 and T50 each contribute to the carbamoyl phosphate site. K77 lines the L-aspartate pocket. Positions 99, 127, and 130 each coordinate carbamoyl phosphate. Positions 161 and 212 each coordinate L-aspartate. Carbamoyl phosphate contacts are provided by G251 and P252.

The protein belongs to the aspartate/ornithine carbamoyltransferase superfamily. ATCase family. Heterododecamer (2C3:3R2) of six catalytic PyrB chains organized as two trimers (C3), and six regulatory PyrI chains organized as three dimers (R2).

The catalysed reaction is carbamoyl phosphate + L-aspartate = N-carbamoyl-L-aspartate + phosphate + H(+). The protein operates within pyrimidine metabolism; UMP biosynthesis via de novo pathway; (S)-dihydroorotate from bicarbonate: step 2/3. Catalyzes the condensation of carbamoyl phosphate and aspartate to form carbamoyl aspartate and inorganic phosphate, the committed step in the de novo pyrimidine nucleotide biosynthesis pathway. The sequence is that of Aspartate carbamoyltransferase catalytic subunit from Campylobacter jejuni subsp. jejuni serotype O:6 (strain 81116 / NCTC 11828).